A 163-amino-acid polypeptide reads, in one-letter code: NADH-quinone oxidoreductase subunit I (163 aa).

4Fe-4S ferredoxin-type domains lie at 54–84 and 94–123; these read LRRY…IDAE and TRYD…EGPN. Cysteine 64, cysteine 67, cysteine 70, cysteine 74, cysteine 103, cysteine 106, cysteine 109, and cysteine 113 together coordinate [4Fe-4S] cluster.

It belongs to the complex I 23 kDa subunit family. In terms of assembly, NDH-1 is composed of at least 14 different subunits, Nqo1 to Nqo14. The complex has a L-shaped structure, with the hydrophobic arm (subunits Nqo7, Nqo8, Nqo10 to Nqo14) embedded in the inner membrane and the hydrophilic peripheral arm (subunits Nqo1 to Nqo6, Nqo9) protruding into the bacterial cytoplasm. The hydrophilic domain contains all the redox centers. NADH-quinone oxidoreductase forms a supercomplex with ubiquinol-cytochrome c reductase complex (complex III or cytochrome b-c1 complex) and cytochrome c oxidase (complex IV), which stabilizes the NADH-quinone oxidoreductase complex. The cofactor is [4Fe-4S] cluster.

The protein resides in the cell inner membrane. The catalysed reaction is a quinone + NADH + 5 H(+)(in) = a quinol + NAD(+) + 4 H(+)(out). In terms of biological role, NDH-1 shuttles electrons from NADH, via FMN and iron-sulfur (Fe-S) centers, to quinones in the respiratory chain. The immediate electron acceptor for the enzyme in this species is believed to be ubiquinone. Couples the redox reaction to proton translocation (for every two electrons transferred, four hydrogen ions are translocated across the cytoplasmic membrane), and thus conserves the redox energy in a proton gradient. In Paracoccus denitrificans (strain Pd 1222), this protein is NADH-quinone oxidoreductase subunit I.